Here is a 489-residue protein sequence, read N- to C-terminus: 3-octaprenyl-4-hydroxybenzoate carboxy-lyase (489 aa).

Residue asparagine 172 coordinates Mn(2+). Prenylated FMN is bound by residues isoleucine 175–arginine 177, arginine 189–leucine 191, and arginine 194–glycine 195. Glutamate 238 provides a ligand contact to Mn(2+). The active-site Proton donor is aspartate 287.

This sequence belongs to the UbiD family. As to quaternary structure, homohexamer. Prenylated FMN serves as cofactor. Mn(2+) is required as a cofactor.

The protein localises to the cell membrane. It catalyses the reaction a 4-hydroxy-3-(all-trans-polyprenyl)benzoate + H(+) = a 2-(all-trans-polyprenyl)phenol + CO2. It participates in cofactor biosynthesis; ubiquinone biosynthesis. Functionally, catalyzes the decarboxylation of 3-octaprenyl-4-hydroxy benzoate to 2-octaprenylphenol, an intermediate step in ubiquinone biosynthesis. This chain is 3-octaprenyl-4-hydroxybenzoate carboxy-lyase, found in Tolumonas auensis (strain DSM 9187 / NBRC 110442 / TA 4).